Here is a 73-residue protein sequence, read N- to C-terminus: ASEPAPACVVMYESWRYTTAANNCADTVSVSVAYQDGATGPCATLPPGAVTTVGEGYLGEHGHPDHLALCPSS.

Intrachain disulfides connect Cys-8–Cys-24 and Cys-42–Cys-70.

In terms of biological role, inhibits mammalian alpha-amylases specifically but has no action on plant and microbial alpha-amylases. This chain is Alpha-amylase inhibitor Paim-1, found in Streptomyces olivaceoviridis (Streptomyces corchorusii).